We begin with the raw amino-acid sequence, 124 residues long: Small ribosomal subunit protein uS11 (124 aa).

The protein belongs to the universal ribosomal protein uS11 family. As to quaternary structure, part of the 30S ribosomal subunit. Interacts with proteins S7 and S18. Binds to IF-3.

Its function is as follows. Located on the platform of the 30S subunit, it bridges several disparate RNA helices of the 16S rRNA. Forms part of the Shine-Dalgarno cleft in the 70S ribosome. The polypeptide is Small ribosomal subunit protein uS11 (Sulfurovum sp. (strain NBC37-1)).